Reading from the N-terminus, the 120-residue chain is Small cysteine and glycine repeat-containing protein 2 (120 aa).

Residues 4–104 (CGCGGCGGCG…TCHSCGCGCG (101 aa)) are 19 X 2 AA repeats of CG.

It belongs to the KRTAP type 28 family.

Its function is as follows. In the hair cortex, hair keratin intermediate filaments are embedded in an interfilamentous matrix, consisting of hair keratin-associated proteins (KRTAP), which are essential for the formation of a rigid and resistant hair shaft through their extensive disulfide bond cross-linking with abundant cysteine residues of hair keratins. The matrix proteins include the high-sulfur and high-glycine-tyrosine keratins. This Homo sapiens (Human) protein is Small cysteine and glycine repeat-containing protein 2.